Reading from the N-terminus, the 1213-residue chain is DNA-directed RNA polymerase subunit beta (1213 aa).

Positions 1153 to 1213 (RDMDEDSSEH…ADESDGKVSK (61 aa)) are disordered. Basic and acidic residues predominate over residues 1171–1198 (MAEEQEKKKLAEETGKSENKEDSNETAD).

This sequence belongs to the RNA polymerase beta chain family. In terms of assembly, the RNAP catalytic core consists of 2 alpha, 1 beta, 1 beta' and 1 omega subunit. When a sigma factor is associated with the core the holoenzyme is formed, which can initiate transcription.

It catalyses the reaction RNA(n) + a ribonucleoside 5'-triphosphate = RNA(n+1) + diphosphate. Functionally, DNA-dependent RNA polymerase catalyzes the transcription of DNA into RNA using the four ribonucleoside triphosphates as substrates. The sequence is that of DNA-directed RNA polymerase subunit beta from Lactobacillus acidophilus (strain ATCC 700396 / NCK56 / N2 / NCFM).